The chain runs to 512 residues: Oryzalexin E synthase (512 aa).

Residues 6-26 form a helical membrane-spanning segment; the sequence is SELWMTAVATCMSLLLYLTIL. C452 is a heme binding site.

The protein belongs to the cytochrome P450 family. Requires heme as cofactor.

Its subcellular location is the membrane. The catalysed reaction is ent-sandaracopimaradien-3beta-ol + reduced [NADPH--hemoprotein reductase] + O2 = oryzalexin E + oxidized [NADPH--hemoprotein reductase] + H2O + H(+). Its function is as follows. Enzyme of the diterpenoid metabolism involved in the biosynthesis of the oryzalexin class of phytoalexins. Can use ent-sandaracopimaradien and syn-stemodene as substrates, but no activity with syn-stemoden-19-oic acid. Hydroxylates 3-alpha-hydroxy-ent-sandaracopimaradiene at C-9-beta, resulting in a 3-alpha,9-beta-diol corresponding to oryzalexins E. This Oryza sativa subsp. japonica (Rice) protein is Oryzalexin E synthase.